We begin with the raw amino-acid sequence, 317 residues long: tRNA N6-adenosine threonylcarbamoyltransferase (317 aa).

Residues His-110 and His-114 each contribute to the Fe cation site. Substrate contacts are provided by residues Val-132–Gly-136, Asp-165, Gly-178, Asp-182, and Asn-271. Asp-300 is a Fe cation binding site.

It belongs to the KAE1 / TsaD family. Fe(2+) serves as cofactor.

The protein resides in the cytoplasm. It carries out the reaction L-threonylcarbamoyladenylate + adenosine(37) in tRNA = N(6)-L-threonylcarbamoyladenosine(37) in tRNA + AMP + H(+). Its function is as follows. Required for the formation of a threonylcarbamoyl group on adenosine at position 37 (t(6)A37) in tRNAs that read codons beginning with adenine. Is involved in the transfer of the threonylcarbamoyl moiety of threonylcarbamoyl-AMP (TC-AMP) to the N6 group of A37, together with TsaE and TsaB. TsaD likely plays a direct catalytic role in this reaction. In Mesoplasma florum (strain ATCC 33453 / NBRC 100688 / NCTC 11704 / L1) (Acholeplasma florum), this protein is tRNA N6-adenosine threonylcarbamoyltransferase.